Reading from the N-terminus, the 3317-residue chain is Cadherin-23 (3317 aa).

Residues 1–23 (MRHPPVTWCAMLWLLMLVSGSWG) form the signal peptide. Over 24–3062 (QVNRLPFFTN…SVQLPDDMSA (3039 aa)) the chain is Extracellular. 27 Cadherin domains span residues 34–132 (HFFD…APTF), 133–236 (HNQP…DPIF), 237–348 (INLP…APEF), 349–458 (NSSE…RPIF), 459–559 (SQPL…VPTF), 560–669 (QKDA…PPTF), 670–782 (SKPA…APYY), 777–888 (KDAP…DPTF), 889–993 (QNLP…TPTF), 994–1100 (FPAV…RPIF), 1101–1206 (LQSS…APVF), 1208–1311 (QQQY…AVQF), 1312–1416 (SNAS…SPRF), 1418–1525 (FTSD…PPVI), 1527–1632 (SPFG…APVF), 1633–1742 (QQPH…VPTF), 1743–1849 (PRDY…DPVL), 1850–1957 (LNLP…HPLF), 1958–2067 (TEGT…WPTF), 2068–2172 (SPPA…RPEF), 2173–2291 (LNPI…TPQF), 2295–2400 (GITY…NPIF), 2401–2507 (DQLS…RPQF), 2508–2609 (SKPQ…RPVF), 2612–2720 (PPNG…EPLF), 2727–2844 (SPQY…PPRF), and 2845–2973 (TKAE…EEEF). Residues asparagine 155 and asparagine 206 are each glycosylated (N-linked (GlcNAc...) asparagine). N-linked (GlcNAc...) asparagine glycosylation is found at asparagine 349, asparagine 391, asparagine 432, asparagine 464, asparagine 470, asparagine 600, asparagine 692, asparagine 763, asparagine 808, asparagine 825, asparagine 939, asparagine 999, asparagine 1016, asparagine 1169, asparagine 1280, asparagine 1313, asparagine 1471, asparagine 1532, asparagine 1649, asparagine 1665, asparagine 1816, asparagine 1855, asparagine 1887, asparagine 1900, asparagine 2012, asparagine 2048, asparagine 2127, asparagine 2166, asparagine 2193, asparagine 2261, asparagine 2355, and asparagine 2367. Residues asparagine 2576, asparagine 2614, asparagine 2747, asparagine 2806, asparagine 2875, asparagine 2894, asparagine 2939, and asparagine 2979 are each glycosylated (N-linked (GlcNAc...) asparagine). A helical membrane pass occupies residues 3063–3083 (LQMAIIVLAILLFLAAMLFVL). Residues 3084 to 3317 (MNWYYRTIHK…MESPLEITEL (234 aa)) lie on the Cytoplasmic side of the membrane.

Antiparallel heterodimer with PCDH15. Interacts with USH1C and USH1G.

It localises to the cell membrane. In terms of biological role, cadherins are calcium-dependent cell adhesion proteins. They preferentially interact with themselves in a homophilic manner in connecting cells. CDH23 is required for establishing and/or maintaining the proper organization of the stereocilia bundle of hair cells in the cochlea and the vestibule during late embryonic/early postnatal development. It is part of the functional network formed by USH1C, USH1G, CDH23 and MYO7A that mediates mechanotransduction in cochlear hair cells. Required for normal hearing. The protein is Cadherin-23 (Cdh23) of Rattus norvegicus (Rat).